The sequence spans 130 residues: Large ribosomal subunit protein uL14 (130 aa).

Belongs to the universal ribosomal protein uL14 family. Part of the 50S ribosomal subunit. Forms a cluster with proteins L3 and L19. In the 70S ribosome, L14 and L19 interact and together make contacts with the 16S rRNA in bridges B5 and B8.

Its function is as follows. Binds to 23S rRNA. Forms part of two intersubunit bridges in the 70S ribosome. This Leptospira interrogans serogroup Icterohaemorrhagiae serovar copenhageni (strain Fiocruz L1-130) protein is Large ribosomal subunit protein uL14.